The primary structure comprises 453 residues: Probable glycine dehydrogenase (decarboxylating) subunit 1 (453 aa).

It belongs to the GcvP family. N-terminal subunit subfamily. As to quaternary structure, the glycine cleavage system is composed of four proteins: P, T, L and H. In this organism, the P 'protein' is a heterodimer of two subunits.

It catalyses the reaction N(6)-[(R)-lipoyl]-L-lysyl-[glycine-cleavage complex H protein] + glycine + H(+) = N(6)-[(R)-S(8)-aminomethyldihydrolipoyl]-L-lysyl-[glycine-cleavage complex H protein] + CO2. Functionally, the glycine cleavage system catalyzes the degradation of glycine. The P protein binds the alpha-amino group of glycine through its pyridoxal phosphate cofactor; CO(2) is released and the remaining methylamine moiety is then transferred to the lipoamide cofactor of the H protein. The protein is Probable glycine dehydrogenase (decarboxylating) subunit 1 of Caulobacter sp. (strain K31).